The primary structure comprises 420 residues: 4-hydroxy-3-methylbut-2-en-1-yl diphosphate synthase (flavodoxin) (420 aa).

4 residues coordinate [4Fe-4S] cluster: C307, C310, C353, and E360.

The protein belongs to the IspG family. The cofactor is [4Fe-4S] cluster.

The catalysed reaction is (2E)-4-hydroxy-3-methylbut-2-enyl diphosphate + oxidized [flavodoxin] + H2O + 2 H(+) = 2-C-methyl-D-erythritol 2,4-cyclic diphosphate + reduced [flavodoxin]. Its pathway is isoprenoid biosynthesis; isopentenyl diphosphate biosynthesis via DXP pathway; isopentenyl diphosphate from 1-deoxy-D-xylulose 5-phosphate: step 5/6. Converts 2C-methyl-D-erythritol 2,4-cyclodiphosphate (ME-2,4cPP) into 1-hydroxy-2-methyl-2-(E)-butenyl 4-diphosphate. The protein is 4-hydroxy-3-methylbut-2-en-1-yl diphosphate synthase (flavodoxin) of Brucella suis biovar 1 (strain 1330).